A 232-amino-acid chain; its full sequence is Cilia- and flagella-associated protein 95 (232 aa).

At 1–96 (MDSSDSSCQE…PVWISETREK (96 aa)) the chain is on the extracellular side. N-linked (GlcNAc...) asparagine glycosylation is present at asparagine 75. The helical transmembrane segment at 97 to 115 (MAQVCLNTKLAKIKSKALL) threads the bilayer. Over 116 to 232 (NEETMNSGII…TGGPIAPFLK (117 aa)) the chain is Cytoplasmic. Positions 153-163 (LTTYAEEYAPP) are mn.

Microtubule inner protein component of sperm flagellar doublet microtubules. Interacts with MYH9. Interacts with MYH10. In terms of tissue distribution, expressed in trachea multiciliated cells.

The protein localises to the cytoplasm. Its subcellular location is the cytoskeleton. It is found in the cilium axoneme. The protein resides in the flagellum axoneme. It localises to the cell membrane. In terms of biological role, microtubule inner protein (MIP) part of the dynein-decorated doublet microtubules (DMTs) in cilia axoneme, which is required for motile cilia beating. This Bos taurus (Bovine) protein is Cilia- and flagella-associated protein 95.